Reading from the N-terminus, the 227-residue chain is Enolase-phosphatase E1 (227 aa).

Positions 11 and 13 each coordinate Mg(2+). Residues 118 to 119 (SS) and lysine 161 contribute to the substrate site. Aspartate 186 lines the Mg(2+) pocket.

Belongs to the HAD-like hydrolase superfamily. MasA/MtnC family. In terms of assembly, monomer. Mg(2+) serves as cofactor.

The protein localises to the cytoplasm. The protein resides in the nucleus. The enzyme catalyses 5-methylsulfanyl-2,3-dioxopentyl phosphate + H2O = 1,2-dihydroxy-5-(methylsulfanyl)pent-1-en-3-one + phosphate. Its pathway is amino-acid biosynthesis; L-methionine biosynthesis via salvage pathway; L-methionine from S-methyl-5-thio-alpha-D-ribose 1-phosphate: step 3/6. It participates in amino-acid biosynthesis; L-methionine biosynthesis via salvage pathway; L-methionine from S-methyl-5-thio-alpha-D-ribose 1-phosphate: step 4/6. In terms of biological role, bifunctional enzyme that catalyzes the enolization of 2,3-diketo-5-methylthiopentyl-1-phosphate (DK-MTP-1-P) into the intermediate 2-hydroxy-3-keto-5-methylthiopentenyl-1-phosphate (HK-MTPenyl-1-P), which is then dephosphorylated to form the acireductone 1,2-dihydroxy-3-keto-5-methylthiopentene (DHK-MTPene). The chain is Enolase-phosphatase E1 from Saccharomyces cerevisiae (strain ATCC 204508 / S288c) (Baker's yeast).